The following is a 388-amino-acid chain: MTKHIKILVIGVGVAGPAVAYWLKRFGFSPVLIEKSAAVRKGGQALDIRGIATHIAKEMGIYDQICNMRTQIKCGRYVDVKGNVLHEEQGETFGFRQDDEVEILRGDLVEILMKAIADIPCEFKQSVIKIEQNEDSVTVTYKDGRVENYDLVIAADGIHSATRGMVFSKNEYQLINLGSYVSAFTIPNYLGLDHMELLCESNHKLVTLQSDSQADKAMAGFMFRSKHVLEDIRDEQEQKHFLHASFQNFGWETQNILNRMPESDDFYFDAITQIKMKSWTKGRIALIGDAAYCPSPLSGQGNNLAFVGAYILAGELKKADGDYIQAFTRYNELLHPFVEANQQFGVWVSESFLLKDDEVSKEIAEARSNKILAMIKSVSNSINLPQYE.

FAD contacts are provided by residues 12–15 (VGVA), 34–36 (EKS), 44–47 (QALD), arginine 105, tyrosine 267, aspartate 289, and 296–302 (PLSGQGN).

The protein belongs to the aromatic-ring hydroxylase family. FAD is required as a cofactor.

It carries out the reaction a tetracycline + NADPH + O2 + H(+) = a (1S,10aS)-3-(CONH2)-1-(Me2N)-3,3a,4,6-(HO)4-2,5-dioxo-1H,10aH,11H,11aH-cyclopenta[b]anthracene + CO + NADP(+) + H2O. The catalysed reaction is 7-chlorotetracycline + NADPH + O2 + H(+) = (1S,10S,10aS)-3-(CONH2)-9-Cl-1-(Me2N)-3,3a,4,10-(HO)4-10-Me-2,5-dioxo-1H,10aH,11H,11aH-cyclopenta[b]anthracen-6-olate + CO + NADP(+) + H2O. Inhibited by anhydrotetracycline. Functionally, an FAD-requiring monooxygenase active on tetracycline antibiotic and some of its derivatives, which leads to their inactivation. Expression in E.coli confers high resistance to tetracycline and oxytetracycline, does not confer resistance to minocycline or tigecycline. Degrades tetracycline and oxytetracycline; the reaction requires NADPH. Degrades and confers resistance to chlortetracycline. The polypeptide is Flavin-dependent monooxygenase (tet(50)) (Unknown prokaryotic organism).